Consider the following 463-residue polypeptide: uncharacterized protein (463 aa).

The first 23 residues, 1-23 (MKFSSIPIASTLLSLLVASSVTA), serve as a signal peptide directing secretion. 2 disordered regions span residues 174–200 (STYN…TKAS) and 239–258 (GAST…QRKN).

Belongs to the but2 family.

The protein localises to the cytoplasm. This is an uncharacterized protein from Schizosaccharomyces pombe (strain 972 / ATCC 24843) (Fission yeast).